Here is a 313-residue protein sequence, read N- to C-terminus: MSTREIRIATRKSALALWQAEYVKARLEQAHPGLQVSLVPMVSRGDKLLDAPLAKIGGKGLFVKELETALLDNEADIAVHSMKDVPMDFPEGLGLYCICEREDPRDAFVSNTFKSLEALPAGSVVGTSSLRRQAQLLARRPDLEIRFLRGNVNTRLAKLDAGEYDAIILAAAGLVRLGFEDRITSTISVDDSLPAGGQGAVGIECRSADSEIHALLAPLHHIDTADRVVAERALNKRLNGGCQVPIACYAVLEGDQLWLRGLVGQPSGGTLLVADARAPRASAEALGVQVAEDLLSQGAEAILKEVYGEAGHP.

The residue at position 242 (Cys-242) is an S-(dipyrrolylmethanemethyl)cysteine.

This sequence belongs to the HMBS family. In terms of assembly, monomer. It depends on dipyrromethane as a cofactor.

The catalysed reaction is 4 porphobilinogen + H2O = hydroxymethylbilane + 4 NH4(+). Its pathway is porphyrin-containing compound metabolism; protoporphyrin-IX biosynthesis; coproporphyrinogen-III from 5-aminolevulinate: step 2/4. Tetrapolymerization of the monopyrrole PBG into the hydroxymethylbilane pre-uroporphyrinogen in several discrete steps. The sequence is that of Porphobilinogen deaminase from Pseudomonas entomophila (strain L48).